The chain runs to 473 residues: Argininosuccinate lyase (473 aa).

The residue at position 2 (alanine 2) is an N-acetylalanine. Lysine 7 carries the post-translational modification N6-acetyllysine. Residue serine 27 participates in 2-(N(omega)-L-arginino)succinate binding. At lysine 69 the chain carries N6-acetyllysine. Residues asparagine 114 and threonine 159 each contribute to the 2-(N(omega)-L-arginino)succinate site. Histidine 160 functions as the Proton acceptor in the catalytic mechanism. The active-site Proton donor is serine 281. Lysine 288 is modified (N6-acetyllysine). 2-(N(omega)-L-arginino)succinate-binding residues include asparagine 289, tyrosine 321, glutamine 326, and lysine 329.

The protein belongs to the lyase 1 family. Argininosuccinate lyase subfamily. Homotetramer. Forms tissue-specific complexes with ASS1, SLC7A1, HSP90AA1 and nitric oxide synthase NOS1, NOS2 or NOS3; the complex maintenance is independent of ASL catalytic function. Acetylation modifies enzyme activity in response to alterations of extracellular nutrient availability. Acetylation increased with trichostin A (TSA) or with nicotinamide (NAM). Glucose increases acetylation by about a factor of 3 with decreasing enzyme activity. Acetylation on Lys-288 is decreased on the addition of extra amino acids resulting in activation of enzyme activity.

It catalyses the reaction 2-(N(omega)-L-arginino)succinate = fumarate + L-arginine. Its pathway is amino-acid biosynthesis; L-arginine biosynthesis; L-arginine from L-ornithine and carbamoyl phosphate: step 3/3. It participates in nitrogen metabolism; urea cycle; L-arginine and fumarate from (N(omega)-L-arginino)succinate: step 1/1. With respect to regulation, enzyme activity is regulated by acetylation. Its function is as follows. Catalyzes the reversible cleavage of L-argininosuccinate to fumarate and L-arginine, an intermediate step reaction in the urea cycle mostly providing for hepatic nitrogen detoxification into excretable urea as well as de novo L-arginine synthesis in nonhepatic tissues. Essential regulator of intracellular and extracellular L-arginine pools. As part of citrulline-nitric oxide cycle, forms tissue-specific multiprotein complexes with argininosuccinate synthase ASS1, transport protein SLC7A1 and nitric oxide synthase NOS1, NOS2 or NOS3, allowing for cell-autonomous L-arginine synthesis while channeling extracellular L-arginine to nitric oxide synthesis pathway. The chain is Argininosuccinate lyase (ASL) from Bos taurus (Bovine).